The following is a 76-amino-acid chain: Sec-independent protein translocase protein TatA (76 aa).

Residues 1 to 21 traverse the membrane as a helical segment; sequence MGGLSIWHWLIVLLIVALVFG. The segment at 40 to 76 is disordered; sequence KDGMKEGETPADAQQLPRTGTVDVNAKETTRSDSNKA. The span at 64 to 76 shows a compositional bias: basic and acidic residues; the sequence is NAKETTRSDSNKA.

Belongs to the TatA/E family. The Tat system comprises two distinct complexes: a TatABC complex, containing multiple copies of TatA, TatB and TatC subunits, and a separate TatA complex, containing only TatA subunits. Substrates initially bind to the TatABC complex, which probably triggers association of the separate TatA complex to form the active translocon.

It localises to the cell inner membrane. Functionally, part of the twin-arginine translocation (Tat) system that transports large folded proteins containing a characteristic twin-arginine motif in their signal peptide across membranes. TatA could form the protein-conducting channel of the Tat system. The chain is Sec-independent protein translocase protein TatA from Burkholderia ambifaria (strain MC40-6).